A 469-amino-acid polypeptide reads, in one-letter code: Glutamate--tRNA ligase (469 aa).

The 'HIGH' region motif lies at Pro-11–Asn-21. The 'KMSKS' region motif lies at Lys-243–Arg-247. Lys-246 is an ATP binding site.

Belongs to the class-I aminoacyl-tRNA synthetase family. Glutamate--tRNA ligase type 1 subfamily. Monomer.

The protein localises to the cytoplasm. The catalysed reaction is tRNA(Glu) + L-glutamate + ATP = L-glutamyl-tRNA(Glu) + AMP + diphosphate. Its function is as follows. Catalyzes the attachment of glutamate to tRNA(Glu) in a two-step reaction: glutamate is first activated by ATP to form Glu-AMP and then transferred to the acceptor end of tRNA(Glu). The protein is Glutamate--tRNA ligase of Burkholderia ambifaria (strain MC40-6).